Consider the following 110-residue polypeptide: Keratin, type II cytoskeletal 8 (110 aa).

The segment at 1–12 (MSTSGPRAFSSR) is head. The IF rod domain occupies 1–110 (MSTSGPRAFS…LDIEIATYRK (110 aa)). Phosphoserine occurs at positions 2, 4, 10, and 11. Omega-N-methylarginine is present on R12. Positions 13 to 25 (FASFIDKVRWSLL) are coil 1A. The segment at 26–39 (QQQKSNMDNMFESY) is linker 1. Residue K29 forms a Glycyl lysine isopeptide (Lys-Gly) (interchain with G-Cter in SUMO2) linkage. Residues 40 to 79 (INNLRDVDEAYMNKVELESRLEGLTDEINFLRQIHEEEIR) form a coil 1B region. K53 bears the N6-acetyllysine mark. A phosphoserine mark is found at S80 and S85. Residues 80 to 86 (SLDMDSI) are linker 12. Positions 87–110 (IAEVRHGDDLRRLALDIEIATYRK) are coil 2. The necessary for interaction with PNN stretch occupies residues 88–99 (AEVRHGDDLRRL). K110 participates in a covalent cross-link: Glycyl lysine isopeptide (Lys-Gly) (interchain with G-Cter in SUMO2).

The protein belongs to the intermediate filament family. In terms of assembly, heterotetramer of two type I and two type II keratins. Forms a heterodimer with KRT18. Associates with KRT20. Interacts with PNN. When associated with KRT19, interacts with DMD. Interacts with TCHP. Interacts with APEX1. Interacts with GPER1. Interacts with EPPK1. Interacts with PKP1 and PKP2. O-glycosylated. O-GlcNAcylation at multiple sites increases solubility, and decreases stability by inducing proteasomal degradation. In terms of processing, O-glycosylated (O-GlcNAcylated), in a cell cycle-dependent manner.

It localises to the cytoplasm. Its subcellular location is the nucleus. The protein resides in the nucleoplasm. It is found in the nucleus matrix. Functionally, together with KRT19, helps to link the contractile apparatus to dystrophin at the costameres of striated muscle. This is Keratin, type II cytoskeletal 8 from Mesocricetus auratus (Golden hamster).